Consider the following 137-residue polypeptide: Small ribosomal subunit protein bS6 (137 aa).

The disordered stretch occupies residues 96–137 (ITEASPMAKAKDERDTRRSSEERAPRAEATEEAEESAENTAE). The segment covering 104–124 (KAKDERDTRRSSEERAPRAEA) has biased composition (basic and acidic residues). Residues 125–137 (TEEAEESAENTAE) show a composition bias toward acidic residues.

The protein belongs to the bacterial ribosomal protein bS6 family.

Its function is as follows. Binds together with bS18 to 16S ribosomal RNA. The polypeptide is Small ribosomal subunit protein bS6 (Shewanella pealeana (strain ATCC 700345 / ANG-SQ1)).